The chain runs to 478 residues: BTB/POZ domain-containing protein 17 (478 aa).

Positions methionine 1–alanine 28 are cleaved as a signal peptide. Residues asparagine 61, asparagine 100, asparagine 195, and asparagine 307 are each glycosylated (N-linked (GlcNAc...) asparagine). The 70-residue stretch at serine 63–leucine 132 folds into the BTB domain. A BACK domain is found at alanine 169–glutamine 269.

It is found in the secreted. This Mus musculus (Mouse) protein is BTB/POZ domain-containing protein 17 (Btbd17).